The sequence spans 147 residues: UPF0306 protein KPN78578_35330 (147 aa).

It belongs to the UPF0306 family.

The protein is UPF0306 protein KPN78578_35330 of Klebsiella pneumoniae subsp. pneumoniae (strain ATCC 700721 / MGH 78578).